A 729-amino-acid polypeptide reads, in one-letter code: Putative cyclic nucleotide-gated ion channel 19 (729 aa).

Topologically, residues 1–172 (MAHTRTFTSR…SKFVQVWTRV (172 aa)) are cytoplasmic. Positions 52-82 (SGPIHSTRRTEPLFSPSPQESPDSSSTVDVP) are disordered. Positions 67–81 (PSPQESPDSSSTVDV) are enriched in low complexity. Residues 173–193 (LAFSSLVAIFIDPLFFFLLLI) traverse the membrane as a helical segment. Over 194–208 (QQDNKCIAIDWRATK) the chain is Extracellular. A helical transmembrane segment spans residues 209 to 229 (VLVSLRSITDLIFFINILLQF). Residues 230–261 (RLAYVAPESRIVGAGQLVDHPRKIARHYFRGK) lie on the Cytoplasmic side of the membrane. Residues 262–282 (FLLDMFIVFPIPQIMILRIIP) form a helical membrane-spanning segment. Over 283–295 (LHLGTRREESEKQ) the chain is Extracellular. Residues 296–316 (ILRATVLFQYIPKLYRLLPLL) traverse the membrane as a helical segment. Topologically, residues 317–332 (AGQTSTGFIFESAWAN) are cytoplasmic. A helical membrane pass occupies residues 333–353 (FVINLLTFMLAGHAVGSCWYL). The Extracellular portion of the chain corresponds to 354–451 (SALQRVKKCM…STLAGNLSPS (98 aa)). Residues 452–472 (YSVGEVFFTMGIIGLGLLLFA) form a helical membrane-spanning segment. The Cytoplasmic portion of the chain corresponds to 473–729 (RLIGNMHNFL…LNTAHSNSNR (257 aa)). Residues 560–677 (IFSL…VTSL) and Glu625 contribute to the a nucleoside 3',5'-cyclic phosphate site. Residues 678–694 (FSRFLRSHRVQGAIRYE) form a calmodulin-binding region. In terms of domain architecture, IQ spans 699–728 (RLRAAMQIQVAWRYRKRQLQRLNTAHSNSN).

Belongs to the cyclic nucleotide-gated cation channel (TC 1.A.1.5) family. Homotetramer or heterotetramer.

The protein resides in the cell membrane. Functionally, putative cyclic nucleotide-gated ion channel. The sequence is that of Putative cyclic nucleotide-gated ion channel 19 (CNGC19) from Arabidopsis thaliana (Mouse-ear cress).